The following is a 515-amino-acid chain: Glycosyltransferase family 92 protein F59C6.8 (515 aa).

A helical membrane pass occupies residues 18 to 38; the sequence is LFIFIAVCLGFLIAVTILAGL. The region spanning 163 to 456 is the GT92 domain; it reads RKVVACFSPL…IEVCYNRIFY (294 aa).

It belongs to the glycosyltransferase 92 family.

It localises to the membrane. This is Glycosyltransferase family 92 protein F59C6.8 from Caenorhabditis elegans.